A 334-amino-acid polypeptide reads, in one-letter code: tRNA N6-adenosine threonylcarbamoyltransferase (334 aa).

2 residues coordinate Fe cation: histidine 111 and histidine 115. Substrate contacts are provided by residues 134-138, aspartate 167, glycine 180, aspartate 184, and asparagine 272; that span reads IVSGG. Fe cation is bound at residue aspartate 300.

It belongs to the KAE1 / TsaD family. Fe(2+) serves as cofactor.

It localises to the cytoplasm. The enzyme catalyses L-threonylcarbamoyladenylate + adenosine(37) in tRNA = N(6)-L-threonylcarbamoyladenosine(37) in tRNA + AMP + H(+). In terms of biological role, required for the formation of a threonylcarbamoyl group on adenosine at position 37 (t(6)A37) in tRNAs that read codons beginning with adenine. Is involved in the transfer of the threonylcarbamoyl moiety of threonylcarbamoyl-AMP (TC-AMP) to the N6 group of A37, together with TsaE and TsaB. TsaD likely plays a direct catalytic role in this reaction. The chain is tRNA N6-adenosine threonylcarbamoyltransferase from Dictyoglomus turgidum (strain DSM 6724 / Z-1310).